A 133-amino-acid chain; its full sequence is U-scoloptoxin(11)-Sm1a (133 aa).

Positions 1–19 (MIWFLAFILFLAAGELVSS) are cleaved as a signal peptide.

This sequence belongs to the scoloptoxin-11 family. In terms of processing, contains 10 disulfide bonds. Expressed by the venom gland.

The protein localises to the secreted. In Scolopendra morsitans (Tanzanian blue ringleg centipede), this protein is U-scoloptoxin(11)-Sm1a.